Consider the following 619-residue polypeptide: Dihydroxy-acid dehydratase (619 aa).

Residue Asp-81 coordinates Mg(2+). A [2Fe-2S] cluster-binding site is contributed by Cys-122. The Mg(2+) site is built by Asp-123 and Lys-124. At Lys-124 the chain carries N6-carboxylysine. Residue Cys-198 participates in [2Fe-2S] cluster binding. A Mg(2+)-binding site is contributed by Glu-494. The active-site Proton acceptor is Ser-520.

This sequence belongs to the IlvD/Edd family. As to quaternary structure, homodimer. The cofactor is [2Fe-2S] cluster. Mg(2+) serves as cofactor.

The catalysed reaction is (2R)-2,3-dihydroxy-3-methylbutanoate = 3-methyl-2-oxobutanoate + H2O. The enzyme catalyses (2R,3R)-2,3-dihydroxy-3-methylpentanoate = (S)-3-methyl-2-oxopentanoate + H2O. The protein operates within amino-acid biosynthesis; L-isoleucine biosynthesis; L-isoleucine from 2-oxobutanoate: step 3/4. Its pathway is amino-acid biosynthesis; L-valine biosynthesis; L-valine from pyruvate: step 3/4. Functions in the biosynthesis of branched-chain amino acids. Catalyzes the dehydration of (2R,3R)-2,3-dihydroxy-3-methylpentanoate (2,3-dihydroxy-3-methylvalerate) into 2-oxo-3-methylpentanoate (2-oxo-3-methylvalerate) and of (2R)-2,3-dihydroxy-3-methylbutanoate (2,3-dihydroxyisovalerate) into 2-oxo-3-methylbutanoate (2-oxoisovalerate), the penultimate precursor to L-isoleucine and L-valine, respectively. This is Dihydroxy-acid dehydratase from Neisseria meningitidis serogroup C / serotype 2a (strain ATCC 700532 / DSM 15464 / FAM18).